The sequence spans 169 residues: S-ribosylhomocysteine lyase (169 aa).

The Fe cation site is built by H54, H58, and C128.

It belongs to the LuxS family. As to quaternary structure, homodimer. It depends on Fe cation as a cofactor.

The catalysed reaction is S-(5-deoxy-D-ribos-5-yl)-L-homocysteine = (S)-4,5-dihydroxypentane-2,3-dione + L-homocysteine. Involved in the synthesis of autoinducer 2 (AI-2) which is secreted by bacteria and is used to communicate both the cell density and the metabolic potential of the environment. The regulation of gene expression in response to changes in cell density is called quorum sensing. Catalyzes the transformation of S-ribosylhomocysteine (RHC) to homocysteine (HC) and 4,5-dihydroxy-2,3-pentadione (DPD). The protein is S-ribosylhomocysteine lyase of Tolumonas auensis (strain DSM 9187 / NBRC 110442 / TA 4).